The following is a 363-amino-acid chain: Carbamoyl phosphate synthase small chain (363 aa).

A CPSase region spans residues 1 to 172; the sequence is MTKRILMLED…AFASPGDGKR (172 aa). Ser-46, Gly-220, and Gly-222 together coordinate L-glutamine. The region spanning 172–359 is the Glutamine amidotransferase type-1 domain; it reads RVVLVDYGVK…MEMMNGKEEG (188 aa). Cys-247 acts as the Nucleophile in catalysis. L-glutamine is bound by residues Leu-248, Gln-251, Asn-289, Gly-291, and Tyr-292. Active-site residues include His-332 and Glu-334.

It belongs to the CarA family. In terms of assembly, composed of two chains; the small (or glutamine) chain promotes the hydrolysis of glutamine to ammonia, which is used by the large (or ammonia) chain to synthesize carbamoyl phosphate. Tetramer of heterodimers (alpha,beta)4.

It carries out the reaction hydrogencarbonate + L-glutamine + 2 ATP + H2O = carbamoyl phosphate + L-glutamate + 2 ADP + phosphate + 2 H(+). It catalyses the reaction L-glutamine + H2O = L-glutamate + NH4(+). It participates in amino-acid biosynthesis; L-arginine biosynthesis; carbamoyl phosphate from bicarbonate: step 1/1. Its pathway is pyrimidine metabolism; UMP biosynthesis via de novo pathway; (S)-dihydroorotate from bicarbonate: step 1/3. Functionally, small subunit of the glutamine-dependent carbamoyl phosphate synthetase (CPSase). CPSase catalyzes the formation of carbamoyl phosphate from the ammonia moiety of glutamine, carbonate, and phosphate donated by ATP, constituting the first step of 2 biosynthetic pathways, one leading to arginine and/or urea and the other to pyrimidine nucleotides. The small subunit (glutamine amidotransferase) binds and cleaves glutamine to supply the large subunit with the substrate ammonia. This Listeria monocytogenes serovar 1/2a (strain ATCC BAA-679 / EGD-e) protein is Carbamoyl phosphate synthase small chain.